The chain runs to 261 residues: Non-homologous end joining protein Ku 1 (261 aa).

One can recognise a Ku domain in the interval 12 to 171; that stretch reads SFSLVAIPVQ…LITLHYSDEV (160 aa).

It belongs to the prokaryotic Ku family. As to quaternary structure, homodimer. Interacts with LigD.

Functionally, with LigD forms a non-homologous end joining (NHEJ) DNA repair enzyme, which repairs dsDNA breaks with reduced fidelity. Binds linear dsDNA with 5'- and 3'- overhangs but not closed circular dsDNA nor ssDNA. Recruits and stimulates the ligase activity of LigD. The polypeptide is Non-homologous end joining protein Ku 1 (Geotalea uraniireducens (strain Rf4) (Geobacter uraniireducens)).